A 301-amino-acid polypeptide reads, in one-letter code: HTH-type transcriptional regulator EstR (301 aa).

The HTH lysR-type domain maps to 5–62 (PSLRQLSYLVTLSETLHFTEAARRSFVTQSTLSGGIMELERLLGGVLVERDRQNVRLT). The segment at residues 22–41 (FTEAARRSFVTQSTLSGGIM) is a DNA-binding region (H-T-H motif).

This sequence belongs to the LysR transcriptional regulatory family.

Functionally, transcriptional regulator of the esterase operon. This Acinetobacter baylyi (strain ATCC 33305 / BD413 / ADP1) protein is HTH-type transcriptional regulator EstR (estR).